The sequence spans 245 residues: Demethylmenaquinone methyltransferase (245 aa).

Residues Thr-58, Asp-79, and 106 to 107 each bind S-adenosyl-L-methionine; that span reads NA.

Belongs to the class I-like SAM-binding methyltransferase superfamily. MenG/UbiE family.

The catalysed reaction is a 2-demethylmenaquinol + S-adenosyl-L-methionine = a menaquinol + S-adenosyl-L-homocysteine + H(+). It participates in quinol/quinone metabolism; menaquinone biosynthesis; menaquinol from 1,4-dihydroxy-2-naphthoate: step 2/2. In terms of biological role, methyltransferase required for the conversion of demethylmenaquinol (DMKH2) to menaquinol (MKH2). The sequence is that of Demethylmenaquinone methyltransferase from Halalkalibacterium halodurans (strain ATCC BAA-125 / DSM 18197 / FERM 7344 / JCM 9153 / C-125) (Bacillus halodurans).